The sequence spans 277 residues: Putative pyruvate, phosphate dikinase regulatory protein (277 aa).

151–158 (GISRTSKT) contributes to the ADP binding site.

The protein belongs to the pyruvate, phosphate/water dikinase regulatory protein family. PDRP subfamily.

The enzyme catalyses N(tele)-phospho-L-histidyl/L-threonyl-[pyruvate, phosphate dikinase] + ADP = N(tele)-phospho-L-histidyl/O-phospho-L-threonyl-[pyruvate, phosphate dikinase] + AMP + H(+). It carries out the reaction N(tele)-phospho-L-histidyl/O-phospho-L-threonyl-[pyruvate, phosphate dikinase] + phosphate + H(+) = N(tele)-phospho-L-histidyl/L-threonyl-[pyruvate, phosphate dikinase] + diphosphate. Bifunctional serine/threonine kinase and phosphorylase involved in the regulation of the pyruvate, phosphate dikinase (PPDK) by catalyzing its phosphorylation/dephosphorylation. The chain is Putative pyruvate, phosphate dikinase regulatory protein from Alkaliphilus metalliredigens (strain QYMF).